We begin with the raw amino-acid sequence, 270 residues long: MRFIPLQTEQQVSCWAAQHIINRINDFKPTAERPFVLGLPTGGTPLKTYQELIRLYQAGKVSFKHVVTFNMDEYVALPEEHPESYHSFMYNNFFNHIDILPENINILNGNTDDHNAECHRYEEKIKSYGKIHLFMGGVGVDGHIAFNEPASSLSSRTRIKTLTQDTLIANSRFFNNDVTQVPKYALTIGVGTLLDAEEVMILATGHQKALAVQAAVEGSINHLWTVSALQMHRHFVLVCDEAAQQELKVKTVKYFTELEGSVAGTDYQDK.

The active-site Proton acceptor; for enolization step is the aspartate 72. Catalysis depends on aspartate 141, which acts as the For ring-opening step. Residue histidine 143 is the Proton acceptor; for ring-opening step of the active site. Glutamate 148 functions as the For ring-opening step in the catalytic mechanism.

This sequence belongs to the glucosamine/galactosamine-6-phosphate isomerase family. NagB subfamily. Homohexamer.

The enzyme catalyses alpha-D-glucosamine 6-phosphate + H2O = beta-D-fructose 6-phosphate + NH4(+). It participates in amino-sugar metabolism; N-acetylneuraminate degradation; D-fructose 6-phosphate from N-acetylneuraminate: step 5/5. Allosterically activated by N-acetylglucosamine 6-phosphate (GlcNAc6P). In terms of biological role, catalyzes the reversible isomerization-deamination of glucosamine 6-phosphate (GlcN6P) to form fructose 6-phosphate (Fru6P) and ammonium ion. The protein is Glucosamine-6-phosphate deaminase of Haemophilus influenzae (strain 86-028NP).